Reading from the N-terminus, the 608-residue chain is Malonate--CoA ligase (608 aa).

This sequence belongs to the ATP-dependent AMP-binding enzyme family. Expressed in flowers.

It is found in the cytoplasm. It localises to the nucleus. The catalysed reaction is malonate + ATP + CoA = malonyl-CoA + AMP + diphosphate. In terms of biological role, malonate--CoA ligase that catalyzes the formation of malonyl-CoA directly from malonate and CoA. May be required for the detoxification of malonate. This is Malonate--CoA ligase (AAE13) from Arabidopsis thaliana (Mouse-ear cress).